The primary structure comprises 177 residues: MTQKAKNTIYLLILIILSMLCLVYASVPLYSIFCKVTGYGGTVRTATVTQSKLGKTTIKIRFNADINKELPWKFYPEIPYTTVKPGEQKLIFYRAENLTNEYVSGMAVYNVTPYKVGKYFNKVACFCFTKQTLSPYQKTIMPVSFFIDPNIETDPETSDVKLITLSYTFFKYKETTK.

Topologically, residues 1–8 are cytoplasmic; it reads MTQKAKNT. A helical; Signal-anchor for type II membrane protein membrane pass occupies residues 9-29; sequence IYLLILIILSMLCLVYASVPL. Residues 30–177 are Periplasmic-facing; sequence YSIFCKVTGY…TFFKYKETTK (148 aa).

The protein belongs to the COX11/CtaG family.

The protein resides in the cell inner membrane. Functionally, exerts its effect at some terminal stage of cytochrome c oxidase synthesis, probably by being involved in the insertion of the copper B into subunit I. The sequence is that of Cytochrome c oxidase assembly protein CtaG from Ehrlichia ruminantium (strain Gardel).